Consider the following 746-residue polypeptide: Probable ubiquitin carboxyl-terminal hydrolase MINDY-4 (746 aa).

3 disordered regions span residues 123 to 179, 198 to 254, and 319 to 342; these read DDET…SEGE, MALG…IKGE, and GKGA…FSNM. 2 stretches are compositionally biased toward polar residues: residues 141 to 152 and 165 to 174; these read YRSQNDLQFNKS and TEAGVTSTGV. The active-site Nucleophile is the Cys-448. The active-site Proton acceptor is His-666.

It belongs to the MINDY deubiquitinase family. FAM188 subfamily.

The catalysed reaction is Thiol-dependent hydrolysis of ester, thioester, amide, peptide and isopeptide bonds formed by the C-terminal Gly of ubiquitin (a 76-residue protein attached to proteins as an intracellular targeting signal).. Functionally, probable hydrolase that can remove 'Lys-48'-linked conjugated ubiquitin from proteins. This chain is Probable ubiquitin carboxyl-terminal hydrolase MINDY-4 (mindy4), found in Xenopus tropicalis (Western clawed frog).